The primary structure comprises 61 residues: Double gene block protein 2 (61 aa).

The Cytoplasmic portion of the chain corresponds to 1–12 (MACCRCDSSPGD). The chain crosses the membrane as a helical; Signal-anchor for type II membrane protein span at residues 13–33 (YSGALLILFISFVFFYITSLS). The Lumenal segment spans residues 34–61 (PQGNTYVHHFDSSSVKTQYVGISTNGDG).

Belongs to the gammacarmovirus double gene block protein 2 family.

It localises to the host endoplasmic reticulum membrane. Cell-to-cell movement function. The polypeptide is Double gene block protein 2 (Melon necrotic spot virus (MNSV)).